Reading from the N-terminus, the 217-residue chain is Glyoxalase ElbB (217 aa).

C135 (nucleophile) is an active-site residue.

Belongs to the peptidase C56 family. Homodimer.

It catalyses the reaction glyoxal + H2O = glycolate + H(+). In terms of biological role, displays glyoxalase activity, catalyzing the conversion of glyoxal to glycolate. However, this apparent glyoxalase activity may reflect a protein deglycase activity, which could be the primary function of this protein like other DJ-1 superfamily members such as PARK7, YajL, YhbO and HchA. Is not able to use methylglyoxal as substrate. In Escherichia coli (strain K12), this protein is Glyoxalase ElbB.